The primary structure comprises 146 residues: Leghemoglobin-3 (146 aa).

A Globin domain is found at 2-146; that stretch reads GFTDKQEALV…LATAIKKAMV (145 aa). Tyr29 is modified (nitrated tyrosine). Ser44 contributes to the heme b binding site. A Phosphoserine modification is found at Ser44. His61 is a binding site for O2. Positions 64, 93, and 96 each coordinate heme b. Tyr134 is subject to Nitrated tyrosine.

The protein belongs to the plant globin family. In terms of assembly, monomer. Post-translationally, nitrated in effective nodules and particularly in hypoxic conditions; this mechanism may play a protective role in the symbiosis by buffering toxic peroxynitrite NO(2)(-). Nitration level decrease during nodule senescence. In terms of processing, phosphorylation at Ser-44 disrupts the molecular environment of its porphyrin ring oxygen binding pocket, thus leading to a reduced oxygen consumption and to the delivery of oxygen O(2) to symbiosomes. As to expression, root nodules.

Its subcellular location is the cytoplasm. The protein localises to the cytosol. The protein resides in the nucleus. Leghemoglobin that reversibly binds oxygen O(2) through a pentacoordinated heme iron. In root nodules, facilitates the diffusion of oxygen to the bacteroids while preventing the bacterial nitrogenase from being inactivated by buffering dioxygen, nitric oxide and carbon monoxide, and promoting the formation of reactive oxygen species (ROS, e.g. H(2)O(2)). This role is essential for symbiotic nitrogen fixation (SNF). The polypeptide is Leghemoglobin-3 (Medicago sativa (Alfalfa)).